A 428-amino-acid polypeptide reads, in one-letter code: Cytochrome c biogenesis protein CcsB (428 aa).

Helical transmembrane passes span 14–34 (LKFAISLIIFIAISSGVGTFI), 72–92 (SLWFLFALILLCISLAACSFR), and 162–182 (IGPLVVHIGLIVLLIGSAYGS).

Belongs to the Ccs1/CcsB family. As to quaternary structure, may interact with CcsA.

It is found in the cellular thylakoid membrane. In terms of biological role, required during biogenesis of c-type cytochromes (cytochrome c6 and cytochrome f) at the step of heme attachment. The polypeptide is Cytochrome c biogenesis protein CcsB (Prochlorococcus marinus (strain MIT 9301)).